The following is a 363-amino-acid chain: Fructose-bisphosphate aldolase C (363 aa).

At Tyr-5 the chain carries Phosphotyrosine. 3 positions are modified to phosphoserine: Ser-36, Ser-39, and Ser-45. Position 56 (Arg-56) interacts with substrate. Lys-111 is subject to N6-acetyllysine. Residue Lys-147 participates in substrate binding. Catalysis depends on Glu-188, which acts as the Proton acceptor. Lys-230 acts as the Schiff-base intermediate with dihydroxyacetone-P in catalysis.

It belongs to the class I fructose-bisphosphate aldolase family. Homotetramer. Interacts with ATP6V1E1. As to expression, expressed exclusively in Purkinje cells in bands running from anterior to posterior across most of the cerebellum. Expressed at higher levels in the brains of BSE-infected animals.

The catalysed reaction is beta-D-fructose 1,6-bisphosphate = D-glyceraldehyde 3-phosphate + dihydroxyacetone phosphate. The protein operates within carbohydrate degradation; glycolysis; D-glyceraldehyde 3-phosphate and glycerone phosphate from D-glucose: step 4/4. This chain is Fructose-bisphosphate aldolase C (Aldoc), found in Mus musculus (Mouse).